The sequence spans 462 residues: Argininosuccinate lyase (462 aa).

This sequence belongs to the lyase 1 family. Argininosuccinate lyase subfamily.

The protein localises to the cytoplasm. It carries out the reaction 2-(N(omega)-L-arginino)succinate = fumarate + L-arginine. Its pathway is amino-acid biosynthesis; L-arginine biosynthesis; L-arginine from L-ornithine and carbamoyl phosphate: step 3/3. This Bacillus cereus (strain ATCC 10987 / NRS 248) protein is Argininosuccinate lyase.